Reading from the N-terminus, the 380-residue chain is Cytochrome b (380 aa).

A run of 4 helical transmembrane segments spans residues 34 to 54 (FGSL…LLAT), 78 to 99 (WLIR…YLHI), 114 to 134 (WNTG…GYVL), and 179 to 199 (FFAL…IHLT). His84 and His98 together coordinate heme b. His183 and His197 together coordinate heme b. His202 contributes to the a ubiquinone binding site. Transmembrane regions (helical) follow at residues 227–247 (LKDI…ALFS), 289–309 (LGGV…PLLH), 321–341 (LSQF…WVGS), and 348–368 (FIII…LLFP).

This sequence belongs to the cytochrome b family. The cytochrome bc1 complex contains 11 subunits: 3 respiratory subunits (MT-CYB, CYC1 and UQCRFS1), 2 core proteins (UQCRC1 and UQCRC2) and 6 low-molecular weight proteins (UQCRH/QCR6, UQCRB/QCR7, UQCRQ/QCR8, UQCR10/QCR9, UQCR11/QCR10 and a cleavage product of UQCRFS1). This cytochrome bc1 complex then forms a dimer. The cofactor is heme b.

The protein resides in the mitochondrion inner membrane. Its function is as follows. Component of the ubiquinol-cytochrome c reductase complex (complex III or cytochrome b-c1 complex) that is part of the mitochondrial respiratory chain. The b-c1 complex mediates electron transfer from ubiquinol to cytochrome c. Contributes to the generation of a proton gradient across the mitochondrial membrane that is then used for ATP synthesis. This Pinguinus impennis (Great auk) protein is Cytochrome b (MT-CYB).